Here is a 131-residue protein sequence, read N- to C-terminus: uncharacterized protein (131 aa).

The interval 101–131 is disordered; sequence SWWPPSGVVRGGPSSWPPSGVAEPREALGLP.

This is an uncharacterized protein from Homo sapiens (Human).